Here is a 300-residue protein sequence, read N- to C-terminus: Nucleotide-binding protein MCCL_0516 (300 aa).

An ATP-binding site is contributed by 15 to 22 (GMSGAGKS). Residue 66-69 (DLRG) participates in GTP binding.

The protein belongs to the RapZ-like family.

Displays ATPase and GTPase activities. This is Nucleotide-binding protein MCCL_0516 from Macrococcus caseolyticus (strain JCSC5402) (Macrococcoides caseolyticum).